Consider the following 525-residue polypeptide: Chromaffin granule amine transporter (525 aa).

At 1 to 21 the chain is on the cytoplasmic side; sequence MLRTILDAPQRLLKEGRASRQ. The helical transmembrane segment at 22–42 threads the bilayer; sequence LVLVVVFVALLLDNMLFTVVV. Over 43–138 the chain is Lumenal, vesicle; that stretch reads PIVPTFLYDM…TGFLEEEITR (96 aa). Residues asparagine 58, asparagine 87, and asparagine 104 are each glycosylated (N-linked (GlcNAc...) asparagine). A helical transmembrane segment spans residues 139–158; sequence VGVLFASKAVMQLLVNPFVG. Topologically, residues 159–167 are cytoplasmic; the sequence is PLTNRIGYH. Residues 168 to 188 form a helical membrane-spanning segment; that stretch reads IPMFAGFVIMFLSTVMFAFSG. The Lumenal, vesicle portion of the chain corresponds to 189-197; it reads TYTLLFVAR. A helical membrane pass occupies residues 198–218; it reads TLQGIGSSFSSVAGLGMLASV. At 219–227 the chain is on the cytoplasmic side; sequence YTDDHERGR. The helical transmembrane segment at 228–250 threads the bilayer; sequence AMGTALGGLALGLLVGAPFGSVM. At 251-256 the chain is on the lumenal, vesicle side; that stretch reads YEFVGK. A helical membrane pass occupies residues 257-279; the sequence is SAPFLILAFLALLDGALQLCILQ. Topologically, residues 280–299 are cytoplasmic; sequence PSKVSPESAKGTPLFMLLKD. The chain crosses the membrane as a helical span at residues 300–319; sequence PYILVAAGSICFANMGVAIL. At 320–335 the chain is on the lumenal, vesicle side; the sequence is EPTLPIWMMQTMCSPK. The helical transmembrane segment at 336–360 threads the bilayer; the sequence is WQLGLAFLPASVSYLIGTNLFGVLA. Topologically, residues 361 to 365 are cytoplasmic; that stretch reads NKMGR. A helical transmembrane segment spans residues 366–386; the sequence is WLCSLIGMLVVGTSLLCVPLA. At 387–397 the chain is on the lumenal, vesicle side; that stretch reads HNIFGLIGPNA. The chain crosses the membrane as a helical span at residues 398–418; it reads GLGLAIGMVDSSMMPIMGHLV. At 419–422 the chain is on the cytoplasmic side; the sequence is DLRH. The helical transmembrane segment at 423–443 threads the bilayer; that stretch reads TSVYGSVYAIADVAFCMGFAI. Residues 444–448 lie on the Lumenal, vesicle side of the membrane; it reads GPSTG. A helical transmembrane segment spans residues 449–470; the sequence is GAIVKAIGFPWLMVITGVINIV. Over 471–525 the chain is Cytoplasmic; it reads YAPLCYYLRSPPAKEEKLAILSQDCPMETRMYATQKPTKEFPLGEDSDEEPDHEE. Positions 503-525 are disordered; that stretch reads ATQKPTKEFPLGEDSDEEPDHEE. Positions 513–525 are enriched in acidic residues; sequence LGEDSDEEPDHEE.

This sequence belongs to the major facilitator superfamily. Vesicular transporter family. In terms of tissue distribution, expressed primarily in neuroendocrine tissues. Highly expressed in chromaffin cells of the adrenal medulla (at protein level). Detected in peripheral sympathetic ganglia (at protein level). Found in some paracrine cells in stomach and duodenum (at protein level). Expressed in substantia nigra. Expressed in gastrointestinal tract.

The protein resides in the cytoplasmic vesicle. It is found in the secretory vesicle membrane. The protein localises to the secretory vesicle. It localises to the synaptic vesicle membrane. Its subcellular location is the endoplasmic reticulum membrane. The enzyme catalyses serotonin(in) + 2 H(+)(out) = serotonin(out) + 2 H(+)(in). The catalysed reaction is (R)-noradrenaline(in) + 2 H(+)(out) = (R)-noradrenaline(out) + 2 H(+)(in). It carries out the reaction dopamine(in) + 2 H(+)(out) = dopamine(out) + 2 H(+)(in). Its activity is regulated as follows. Strongly inhibited by reserpine. Also inhibited to a lesser extent by ketanserin and fenfluramine. Not significantly inhibited by tetrabenazine. Functionally, electrogenic antiporter that exchanges one cationic monoamine with two intravesicular protons across the membrane of secretory and synaptic vesicles. Uses the electrochemical proton gradient established by the V-type proton-pump ATPase to accumulate high concentrations of monoamines inside the vesicles prior to their release via exocytosis. Transports catecholamines and indolamines with higher affinity for serotonin. Regulates the transvesicular monoaminergic gradient that determines the quantal size. Mediates presynaptic monoaminergic vesicle transport in the amygdala and prefrontal brain regions related with emotion processing in response to environmental stimuli. In terms of biological role, unable to uptake serotonin. The chain is Chromaffin granule amine transporter (SLC18A1) from Homo sapiens (Human).